A 120-amino-acid chain; its full sequence is Myohemerythrin (120 aa).

Fe cation is bound by residues H26, H56, E60, H75, H79, H108, and D113.

It belongs to the hemerythrin family.

In terms of biological role, myohemerythrin is an oxygen-binding protein found in the retractor muscles of certain worms. The oxygen-binding site contains two iron atoms. The protein is Myohemerythrin of Riftia pachyptila (Vent tube worm).